We begin with the raw amino-acid sequence, 710 residues long: Polyribonucleotide nucleotidyltransferase (710 aa).

Asp489 and Asp495 together coordinate Mg(2+). The region spanning 556–615 (PKIDTIKIDVDKIKVVIGKGGETIDKIIAETGVKIDIDDEGNVSIYSSDQAAIDRTKEII) is the KH domain. The S1 motif domain occupies 625 to 693 (GEVYHAKVIR…EKGRVDASMK (69 aa)). The disordered stretch occupies residues 691–710 (SMKALIPRPPKPEKKEEKHD). A compositionally biased stretch (basic and acidic residues) spans 700 to 710 (PKPEKKEEKHD).

Belongs to the polyribonucleotide nucleotidyltransferase family. Mg(2+) serves as cofactor.

The protein resides in the cytoplasm. The enzyme catalyses RNA(n+1) + phosphate = RNA(n) + a ribonucleoside 5'-diphosphate. Involved in mRNA degradation. Catalyzes the phosphorolysis of single-stranded polyribonucleotides processively in the 3'- to 5'-direction. In Streptococcus pyogenes serotype M18 (strain MGAS8232), this protein is Polyribonucleotide nucleotidyltransferase.